The following is a 217-amino-acid chain: Nascent polypeptide-associated complex subunit alpha (217 aa).

A disordered region spans residues 1-45; that stretch reads MPELTEIKSEAAPSTSAEAKPEDVRVEDDGSDSDSDGGMPGLEEA. Residues 19-28 are compositionally biased toward basic and acidic residues; sequence AKPEDVRVED. One can recognise an NAC-A/B domain in the interval 70–135; sequence SRGEKKARKI…AKIEDLSQQA (66 aa). Residues 154 to 177 are disordered; the sequence is SVGATTSVAPIAEEDEEDVDDTGV. Acidic residues predominate over residues 165–176; it reads AEEDEEDVDDTG. In terms of domain architecture, UBA spans 177-217; the sequence is VDEKDIELVITQANTTRAKAIKALKNNNNDIVNAIMELTML.

It belongs to the NAC-alpha family. Part of the nascent polypeptide-associated complex (NAC), consisting of Nac-alpha and bicaudal (bic).

May promote appropriate targeting of ribosome-nascent polypeptide complexes. Required for correct localization of the osk/oskar protein to the posterior pole during embryonic development. The osk protein directs the recruitment of molecules responsible for posterior body patterning and germline formation in the embryo. The protein is Nascent polypeptide-associated complex subunit alpha (Nacalpha) of Drosophila melanogaster (Fruit fly).